Reading from the N-terminus, the 314-residue chain is Inactive chitinase-like protein 1 (314 aa).

The signal sequence occupies residues 1-19 (MKEIVRALEGYGPPKDKAA). Residues 20-60 (EQCGWQAGGALCPGGLCCSQYGWCANTPEYCGSGCQSQCDG) form the Chitin-binding type-1 domain. Cystine bridges form between C22/C37, C31/C43, C36/C50, C54/C58, C92/C154, C166/C174, and C273/C305.

This sequence belongs to the glycosyl hydrolase 19 family. Chitinase class I subfamily.

Inactive chitinase-like protein that does not exhibit hydrolytic activity toward chitin. Binds strongly to chitin and possesses antifungal activity toward the fungal pathogen Altenaria alternata in plate assays. Inhibits the growth of Fusarium oxysporum on plate assays. Probably involved in defense against fungal pathogens through a mechanism that only involves carbohydrate binding. This chain is Inactive chitinase-like protein 1, found in Hevea brasiliensis (Para rubber tree).